We begin with the raw amino-acid sequence, 735 residues long: DNA replication licensing factor mcm5 (735 aa).

An MCM domain is found at 332 to 538 (IYETVAKSIA…RDMTLAKHVM (207 aa)). ADP is bound at residue arginine 372. An Arginine finger motif is present at residues 513–516 (SRFD).

The protein belongs to the MCM family. In terms of assembly, component of the mcm2-7 complex (RLF-M). The complex forms a toroidal hexameric ring with the proposed subunit order mcm2-mcm6-mcm4-mcm7-mcm3-mcm5. The heterodimer of mmcm3/mcm5 interacts with mcm4, mmcm6, mcm7 and weakly with mcm2. Component of the CMG helicase complex, composed of the mcm2-7 complex, the GINS complex and cdc45.

It is found in the nucleus. The protein localises to the chromosome. It carries out the reaction ATP + H2O = ADP + phosphate + H(+). In terms of biological role, acts as a component of the MCM2-7 complex (MCM complex) which is the replicative helicase essential for 'once per cell cycle' DNA replication initiation and elongation in eukaryotic cells. Core component of CDC45-MCM-GINS (CMG) helicase, the molecular machine that unwinds template DNA during replication, and around which the replisome is built. The active ATPase sites in the MCM2-7 ring are formed through the interaction surfaces of two neighboring subunits such that a critical structure of a conserved arginine finger motif is provided in trans relative to the ATP-binding site of the Walker A box of the adjacent subunit. The six ATPase active sites, however, are likely to contribute differentially to the complex helicase activity. The protein is DNA replication licensing factor mcm5 of Xenopus tropicalis (Western clawed frog).